Reading from the N-terminus, the 155-residue chain is Small ribosomal subunit protein uS10m (155 aa).

This sequence belongs to the universal ribosomal protein uS10 family. As to quaternary structure, component of the mitochondrial ribosome small subunit (28S) which comprises a 12S rRNA and about 30 distinct proteins.

Its subcellular location is the mitochondrion. This Rattus norvegicus (Rat) protein is Small ribosomal subunit protein uS10m (Mrps10).